Here is a 553-residue protein sequence, read N- to C-terminus: Serine/threonine-protein phosphatase 2B catalytic subunit A1 (553 aa).

Position 2 is an N-acetylserine (Ser2). Fe cation contacts are provided by Asp119, His121, and Asp147. Zn(2+)-binding residues include Asp147 and Asn179. The Proton donor role is filled by His180. 2 residues coordinate Zn(2+): His228 and His317. The segment at 413–447 (LDPESEPKAAEETVKARANATKETGTPSDEKASSA) is disordered. The segment covering 417–427 (SEPKAAEETVK) has biased composition (basic and acidic residues).

It belongs to the PPP phosphatase family. PP-2B subfamily. Composed of two components (A and B), the A component is the catalytic subunit and the B component confers calcium sensitivity. Requires Fe(3+) as cofactor. Zn(2+) serves as cofactor.

It carries out the reaction O-phospho-L-seryl-[protein] + H2O = L-seryl-[protein] + phosphate. The catalysed reaction is O-phospho-L-threonyl-[protein] + H2O = L-threonyl-[protein] + phosphate. Its function is as follows. Calcium-dependent, calmodulin-stimulated protein phosphatase. This subunit may have a role in the calmodulin activation of calcineurin. This Saccharomyces cerevisiae (strain ATCC 204508 / S288c) (Baker's yeast) protein is Serine/threonine-protein phosphatase 2B catalytic subunit A1 (CNA1).